Consider the following 699-residue polypeptide: D-(-)-3-hydroxybutyrate oligomer hydrolase (699 aa).

Residues 1-33 (MTAIRGGSRRAPGLALALLGGVLLGACHGDENA) form the signal peptide. Residue serine 311 is the Charge relay system of the active site.

This sequence belongs to the D-(-)-3-hydroxybutyrate oligomer hydrolase family.

It localises to the secreted. The catalysed reaction is (3R)-hydroxybutanoate dimer + H2O = 2 (R)-3-hydroxybutanoate + H(+). It participates in lipid metabolism; butanoate metabolism. Functionally, participates in the degradation of poly-3-hydroxybutyrate (PHB). It works downstream of poly(3-hydroxybutyrate) depolymerase, hydrolyzing D(-)-3-hydroxybutyrate oligomers of various length (3HB-oligomers) into 3HB-monomers. In Burkholderia pseudomallei (strain 1106a), this protein is D-(-)-3-hydroxybutyrate oligomer hydrolase.